We begin with the raw amino-acid sequence, 825 residues long: Arabinolytic transcriptional activator araR (825 aa).

Residues 1–17 show a composition bias toward polar residues; the sequence is MASSHQGNGTVPNSQTD. The tract at residues 1–28 is disordered; sequence MASSHQGNGTVPNSQTDAPPDSSTKRRW. Residues 35 to 61 constitute a DNA-binding region (zn(2)-C6 fungal-type); sequence CDSCHARRVRCDRQFPCSRCLRSEITC. Residues 117-152 form a disordered region; it reads STFHHRSPPANAPTVSAPSVDGRRSQTDPQLPVRRP.

It belongs to the xlnR/xlr1 family. araR subfamily.

Its subcellular location is the nucleus. Functionally, transcriptional activator of the arabinanolytic system. Involved in the regulation of extracellular arabinanolytic genes and in the regulation of the intracellular activities of L-arabinose catabolic genes in the pentose catabolic pathway (PCP) in response to the presence of L-arabinose. The sequence is that of Arabinolytic transcriptional activator araR from Emericella nidulans (strain FGSC A4 / ATCC 38163 / CBS 112.46 / NRRL 194 / M139) (Aspergillus nidulans).